Consider the following 398-residue polypeptide: 8-amino-7-oxononanoate synthase (398 aa).

Arg-23 is a binding site for substrate. Position 110-111 (110-111 (GY)) interacts with pyridoxal 5'-phosphate. A substrate-binding site is contributed by His-135. Pyridoxal 5'-phosphate contacts are provided by Ser-181, His-209, and Thr-237. Lys-240 carries the N6-(pyridoxal phosphate)lysine modification. Thr-354 provides a ligand contact to substrate.

The protein belongs to the class-II pyridoxal-phosphate-dependent aminotransferase family. BioF subfamily. In terms of assembly, homodimer. Pyridoxal 5'-phosphate is required as a cofactor.

The enzyme catalyses 6-carboxyhexanoyl-[ACP] + L-alanine + H(+) = (8S)-8-amino-7-oxononanoate + holo-[ACP] + CO2. The protein operates within cofactor biosynthesis; biotin biosynthesis. Catalyzes the decarboxylative condensation of pimeloyl-[acyl-carrier protein] and L-alanine to produce 8-amino-7-oxononanoate (AON), [acyl-carrier protein], and carbon dioxide. In Anaeromyxobacter sp. (strain K), this protein is 8-amino-7-oxononanoate synthase.